The sequence spans 322 residues: uncharacterized protein (322 aa).

Transmembrane regions (helical) follow at residues 24–44 (LLHL…IQIT), 68–88 (LFFE…LIFI), 100–120 (IVTS…TPTF), and 125–145 (VQLI…MPSL).

The protein localises to the cell membrane. This is an uncharacterized protein from Bacillus subtilis (strain 168).